We begin with the raw amino-acid sequence, 246 residues long: Cell division protein ZapD (246 aa).

Belongs to the ZapD family. As to quaternary structure, interacts with FtsZ.

The protein localises to the cytoplasm. Cell division factor that enhances FtsZ-ring assembly. Directly interacts with FtsZ and promotes bundling of FtsZ protofilaments, with a reduction in FtsZ GTPase activity. The polypeptide is Cell division protein ZapD (Vibrio parahaemolyticus serotype O3:K6 (strain RIMD 2210633)).